A 492-amino-acid polypeptide reads, in one-letter code: Trypanothione reductase (492 aa).

35–52 lines the FAD pocket; that stretch reads DVQTVHGPPFFAALGGTC. Residues cysteine 52 and cysteine 57 are joined by a disulfide bond. The active-site Proton acceptor is histidine 461.

This sequence belongs to the class-I pyridine nucleotide-disulfide oxidoreductase family. In terms of assembly, homodimer. It depends on FAD as a cofactor.

It is found in the cytoplasm. It catalyses the reaction trypanothione + NADP(+) = trypanothione disulfide + NADPH + H(+). Functionally, trypanothione is the parasite analog of glutathione; this enzyme is the equivalent of glutathione reductase. This Trypanosoma congolense protein is Trypanothione reductase (TPR).